We begin with the raw amino-acid sequence, 449 residues long: Exodeoxyribonuclease 7 large subunit (449 aa).

It belongs to the XseA family. Heterooligomer composed of large and small subunits.

The protein resides in the cytoplasm. The enzyme catalyses Exonucleolytic cleavage in either 5'- to 3'- or 3'- to 5'-direction to yield nucleoside 5'-phosphates.. Its function is as follows. Bidirectionally degrades single-stranded DNA into large acid-insoluble oligonucleotides, which are then degraded further into small acid-soluble oligonucleotides. The polypeptide is Exodeoxyribonuclease 7 large subunit (Salmonella typhimurium (strain LT2 / SGSC1412 / ATCC 700720)).